A 994-amino-acid chain; its full sequence is Valine--tRNA ligase (994 aa).

A 'HIGH' region motif is present at residues 43-53 (PNVTGTLHMGH). A disordered region spans residues 332–356 (IASGATSDTTDTPSDSDASNASNQH). Residues 333–353 (ASGATSDTTDTPSDSDASNAS) show a composition bias toward low complexity. Residues 585–589 (KMSKS) carry the 'KMSKS' region motif. An ATP-binding site is contributed by lysine 588. Positions 691–713 (TAHSPAQHQAGQDGQDVPRTPQP) are disordered. Residues 928–994 (LIDVDAERAR…NGLRERRTTL (67 aa)) are a coiled coil.

It belongs to the class-I aminoacyl-tRNA synthetase family. ValS type 1 subfamily. In terms of assembly, monomer.

The protein localises to the cytoplasm. The enzyme catalyses tRNA(Val) + L-valine + ATP = L-valyl-tRNA(Val) + AMP + diphosphate. Its function is as follows. Catalyzes the attachment of valine to tRNA(Val). As ValRS can inadvertently accommodate and process structurally similar amino acids such as threonine, to avoid such errors, it has a 'posttransfer' editing activity that hydrolyzes mischarged Thr-tRNA(Val) in a tRNA-dependent manner. The polypeptide is Valine--tRNA ligase (Xylella fastidiosa (strain M23)).